The sequence spans 85 residues: UPF0386 protein Bind_1628 (85 aa).

This sequence belongs to the UPF0386 family.

This is UPF0386 protein Bind_1628 from Beijerinckia indica subsp. indica (strain ATCC 9039 / DSM 1715 / NCIMB 8712).